Reading from the N-terminus, the 145-residue chain is MNGYEAYMKELAQQMRAELTDNGFTSLETSDDVNQYMQNIDNDDTTFVVINSTCGCAAGLARPAAVAVAEQNEVKPDHKVTVFAGQDKEATQTMRDYIQQVPSSPSYALFKGQHLVHFIPREHIEGRDINDIAMDLKDAFDDNCQ.

The protein belongs to the bacilliredoxin family.

In Staphylococcus epidermidis (strain ATCC 35984 / DSM 28319 / BCRC 17069 / CCUG 31568 / BM 3577 / RP62A), this protein is Bacilliredoxin SERP1006.